A 432-amino-acid chain; its full sequence is Glutamine synthetase, chloroplastic (432 aa).

The 81-residue stretch at 79–159 (IIAEYIWIGG…VICDTYTPQG (81 aa)) folds into the GS beta-grasp domain. Residues 166-432 (KRHKAAQIFS…LAAQKLSLNV (267 aa)) enclose the GS catalytic domain.

Belongs to the glutamine synthetase family. As to quaternary structure, homooctamer.

The protein localises to the plastid. It is found in the chloroplast. It catalyses the reaction L-glutamate + NH4(+) + ATP = L-glutamine + ADP + phosphate + H(+). Its function is as follows. The light-modulated chloroplast enzyme, encoded by a nuclear gene and expressed primarily in leaves, is responsible for the reassimilation of the ammonia generated by photorespiration. The sequence is that of Glutamine synthetase, chloroplastic (GLN2) from Daucus carota (Wild carrot).